Reading from the N-terminus, the 359-residue chain is 4-hydroxy-3-methylbut-2-en-1-yl diphosphate synthase (flavodoxin) (359 aa).

Residues C264, C267, C299, and E306 each contribute to the [4Fe-4S] cluster site.

The protein belongs to the IspG family. Requires [4Fe-4S] cluster as cofactor.

It carries out the reaction (2E)-4-hydroxy-3-methylbut-2-enyl diphosphate + oxidized [flavodoxin] + H2O + 2 H(+) = 2-C-methyl-D-erythritol 2,4-cyclic diphosphate + reduced [flavodoxin]. It functions in the pathway isoprenoid biosynthesis; isopentenyl diphosphate biosynthesis via DXP pathway; isopentenyl diphosphate from 1-deoxy-D-xylulose 5-phosphate: step 5/6. In terms of biological role, converts 2C-methyl-D-erythritol 2,4-cyclodiphosphate (ME-2,4cPP) into 1-hydroxy-2-methyl-2-(E)-butenyl 4-diphosphate. In Helicobacter pylori (strain HPAG1), this protein is 4-hydroxy-3-methylbut-2-en-1-yl diphosphate synthase (flavodoxin).